A 394-amino-acid polypeptide reads, in one-letter code: Elongation factor Tu (394 aa).

Residues 10–204 (KPHVNVGTIG…FLDSYIPEPE (195 aa)) enclose the tr-type G domain. Residues 19–26 (GHVDHGKT) are G1. 19 to 26 (GHVDHGKT) contributes to the GTP binding site. Thr26 provides a ligand contact to Mg(2+). A G2 region spans residues 60–64 (GITIN). The tract at residues 81–84 (DCPG) is G3. GTP contacts are provided by residues 81–85 (DCPGH) and 136–139 (NKCD). The G4 stretch occupies residues 136–139 (NKCD). The segment at 174–176 (SAL) is G5.

The protein belongs to the TRAFAC class translation factor GTPase superfamily. Classic translation factor GTPase family. EF-Tu/EF-1A subfamily. As to quaternary structure, monomer.

The protein localises to the cytoplasm. It carries out the reaction GTP + H2O = GDP + phosphate + H(+). In terms of biological role, GTP hydrolase that promotes the GTP-dependent binding of aminoacyl-tRNA to the A-site of ribosomes during protein biosynthesis. The chain is Elongation factor Tu from Salmonella arizonae (strain ATCC BAA-731 / CDC346-86 / RSK2980).